A 356-amino-acid chain; its full sequence is S-adenosylmethionine:tRNA ribosyltransferase-isomerase (356 aa).

This sequence belongs to the QueA family. As to quaternary structure, monomer.

Its subcellular location is the cytoplasm. The enzyme catalyses 7-aminomethyl-7-carbaguanosine(34) in tRNA + S-adenosyl-L-methionine = epoxyqueuosine(34) in tRNA + adenine + L-methionine + 2 H(+). The protein operates within tRNA modification; tRNA-queuosine biosynthesis. Functionally, transfers and isomerizes the ribose moiety from AdoMet to the 7-aminomethyl group of 7-deazaguanine (preQ1-tRNA) to give epoxyqueuosine (oQ-tRNA). In Enterobacter sp. (strain 638), this protein is S-adenosylmethionine:tRNA ribosyltransferase-isomerase.